The sequence spans 342 residues: DNA-directed RNA polymerase subunit alpha (342 aa).

The interval Met-1 to Asp-238 is alpha N-terminal domain (alpha-NTD). Residues Phe-254–Ile-342 form an alpha C-terminal domain (alpha-CTD) region.

This sequence belongs to the RNA polymerase alpha chain family. As to quaternary structure, homodimer. The RNAP catalytic core consists of 2 alpha, 1 beta, 1 beta' and 1 omega subunit. When a sigma factor is associated with the core the holoenzyme is formed, which can initiate transcription.

The enzyme catalyses RNA(n) + a ribonucleoside 5'-triphosphate = RNA(n+1) + diphosphate. DNA-dependent RNA polymerase catalyzes the transcription of DNA into RNA using the four ribonucleoside triphosphates as substrates. The protein is DNA-directed RNA polymerase subunit alpha of Pelagibacter ubique (strain HTCC1062).